The chain runs to 75 residues: MQVLVRDNNVDQALRALKKKMQREGIFREMKMRDYYEKPSQKRAREKAEAVRRVRKLARKRAQREGLIAAPRASR.

The protein belongs to the bacterial ribosomal protein bS21 family.

The chain is Small ribosomal subunit protein bS21A (rpsU1) from Agrobacterium fabrum (strain C58 / ATCC 33970) (Agrobacterium tumefaciens (strain C58)).